A 166-amino-acid polypeptide reads, in one-letter code: Mitochondrial inner membrane protease subunit 1 (166 aa).

Active-site residues include S40 and K83.

It belongs to the peptidase S26 family. IMP1 subfamily. In terms of assembly, heterodimer of 2 subunits, IMMPL1 and IMMPL2.

It is found in the mitochondrion inner membrane. In terms of biological role, catalyzes the removal of transit peptides required for the targeting of proteins from the mitochondrial matrix, across the inner membrane, into the inter-membrane space. Known to process the nuclear encoded protein DIABLO. In Homo sapiens (Human), this protein is Mitochondrial inner membrane protease subunit 1 (IMMP1L).